A 502-amino-acid polypeptide reads, in one-letter code: Glycerol kinase (502 aa).

ADP is bound at residue threonine 13. ATP-binding residues include threonine 13, threonine 14, and serine 15. Residue threonine 13 participates in sn-glycerol 3-phosphate binding. Arginine 17 provides a ligand contact to ADP. 4 residues coordinate sn-glycerol 3-phosphate: arginine 83, glutamate 84, tyrosine 135, and aspartate 245. Residues arginine 83, glutamate 84, tyrosine 135, aspartate 245, and glutamine 246 each contribute to the glycerol site. ADP-binding residues include threonine 267 and glycine 310. Residues threonine 267, glycine 310, glutamine 314, and glycine 411 each coordinate ATP. The ADP site is built by glycine 411 and asparagine 415.

It belongs to the FGGY kinase family. In terms of assembly, homotetramer and homodimer (in equilibrium).

The enzyme catalyses glycerol + ATP = sn-glycerol 3-phosphate + ADP + H(+). The protein operates within polyol metabolism; glycerol degradation via glycerol kinase pathway; sn-glycerol 3-phosphate from glycerol: step 1/1. Activated by phosphorylation and inhibited by fructose 1,6-bisphosphate (FBP). Its function is as follows. Key enzyme in the regulation of glycerol uptake and metabolism. Catalyzes the phosphorylation of glycerol to yield sn-glycerol 3-phosphate. The chain is Glycerol kinase from Lactobacillus delbrueckii subsp. bulgaricus (strain ATCC BAA-365 / Lb-18).